The sequence spans 238 residues: MNARAAAVAELERRIGYVFTDRDLLERALTHASVGDGARAVRHNERLEFLGDRVLNLCAAERLMALDPDAREGEMSRLLASLVNYHACARAAKRAGLQEALRLSASATKVGARKSDAVLGDACEALIAALYIDGGLETARAFFLKFWDEEFARLDEPRAKDPKTQLQEWVQGMGLPLPTYEIVSQEGPPHAPSFTVEVQVAGFGAERGEGRSRQAAEKAAAQCMLLKREGPEPGKVGE.

Positions 8-135 (VAELERRIGY…LIAALYIDGG (128 aa)) constitute an RNase III domain. E48 is a Mg(2+) binding site. The active site involves D52. D121 and E124 together coordinate Mg(2+). E124 is an active-site residue. The DRBM domain maps to 161 to 230 (DPKTQLQEWV…AQCMLLKREG (70 aa)).

The protein belongs to the ribonuclease III family. Homodimer. Mg(2+) serves as cofactor.

Its subcellular location is the cytoplasm. The enzyme catalyses Endonucleolytic cleavage to 5'-phosphomonoester.. In terms of biological role, digests double-stranded RNA. Involved in the processing of primary rRNA transcript to yield the immediate precursors to the large and small rRNAs (23S and 16S). Processes some mRNAs, and tRNAs when they are encoded in the rRNA operon. Processes pre-crRNA and tracrRNA of type II CRISPR loci if present in the organism. In Phenylobacterium zucineum (strain HLK1), this protein is Ribonuclease 3.